Consider the following 503-residue polypeptide: Annexin A11 (503 aa).

2 stretches are compositionally biased toward pro residues: residues 80 to 117 (GYPP…PGMP) and 123 to 167 (PGAP…PVPS). A disordered region spans residues 80-172 (GYPPVPPGGF…QPVPSYPGYS (93 aa)). Annexin repeat units follow at residues 198–269 (FDPL…ALMK), 270–341 (TPVL…SLSQ), 353–425 (SLVQ…AVVK), and 429–500 (NTPA…KICG). An N6-acetyllysine mark is found at Lys246 and Lys253. Lys477 bears the N6-acetyllysine mark.

This sequence belongs to the annexin family. Interacts with S100A6. Interacts with PDCD6 in a calcium-dependent manner. Interacts with KIF23 during cytokinesis.

It is found in the cytoplasm. It localises to the melanosome. The protein localises to the nucleus envelope. Its subcellular location is the nucleus. The protein resides in the nucleoplasm. It is found in the cytoskeleton. It localises to the spindle. Its function is as follows. Required for midbody formation and completion of the terminal phase of cytokinesis. Binds specifically to calcyclin in a calcium-dependent manner. The sequence is that of Annexin A11 (Anxa11) from Mus musculus (Mouse).